A 353-amino-acid chain; its full sequence is ATP-dependent kinase YFH7 (353 aa).

31 to 39 (GPPGSGKST) serves as a coordination point for ATP.

This sequence belongs to the YFH7 family.

Its function is as follows. ATP-dependent kinase that could be involved in endoplasmic reticulum membrane assembly. The protein is ATP-dependent kinase YFH7 (YFH7) of Kluyveromyces lactis (strain ATCC 8585 / CBS 2359 / DSM 70799 / NBRC 1267 / NRRL Y-1140 / WM37) (Yeast).